The chain runs to 571 residues: Zinc metalloproteinase-disintegrin-like jararhagin (571 aa).

A propeptide spanning residues 1-150 (ATRPKGAVQP…KKASQLAFTA (150 aa)) is cleaved from the precursor. Glu151 is subject to Pyrrolidone carboxylic acid (Glu). The 197-residue stretch at 159–355 (KYIEFFVVVD…HNPECIINEP (197 aa)) folds into the Peptidase M12B domain. Ca(2+)-binding residues include Glu162 and Asp246. Intrachain disulfides connect Cys270–Cys350, Cys310–Cys334, and Cys312–Cys317. Residue His295 coordinates Zn(2+). Residue Glu296 is part of the active site. Zn(2+) contacts are provided by His299 and His305. The N-linked (GlcNAc...) asparagine glycan is linked to Asn333. The Ca(2+) site is built by Cys350, Asn353, Val365, Asn368, Leu370, Glu372, Glu375, and Asp378. One can recognise a Disintegrin domain in the interval 363-449 (PPVCGNELLE…ECPADVFHKN (87 aa)). Intrachain disulfides connect Cys366-Cys385, Cys366-Cys395, Cys377-Cys390, Cys377-Cys395, Cys379-Cys385, Cys389-Cys412, Cys403-Cys409, Cys408-Cys434, Cys421-Cys441, Cys428-Cys453, Cys428-Cys460, Cys453-Cys465, Cys460-Cys465, Cys472-Cys487, Cys472-Cys522, Cys487-Cys533, Cys500-Cys510, Cys510-Cys517, Cys517-Cys559, Cys522-Cys533, Cys553-Cys564, and Cys559-Cys564. The D/ECD-tripeptide motif lies at 427-429 (ECD). 5 residues coordinate Ca(2+): Asp429, Pro430, Glu432, Asp444, and Val445.

This sequence belongs to the venom metalloproteinase (M12B) family. P-III subfamily. P-IIIb sub-subfamily. Monomer (Jararhagin and Jararhagin-C) and dimer (Jaracetin). The cofactor is Zn(2+). Post-translationally, the N-terminus of Jararhagin is blocked. Expressed by the venom gland.

It is found in the secreted. It carries out the reaction Cleavage of 10-His-|-Leu-11, 14-Ala-|-Leu-15, 16-Tyr-|-Leu-17 and 24-Phe-|-Phe-25 bonds in insulin B chain.. Inhibited by EDTA, 1,10 phenanthroline and batimastat (a peptidomimetic MMP inhibitor). Functionally, snake venom zinc metalloproteinase-disintegrin-like jararhagin: causes hemorrhage. This is the result of the degradation of sub-endothelial matrix proteins leading to the disruption of the blood vessel endothelium, with accompanying disturbances in platelet function. It is able to degrade von Willebrand factor (vWF) and it hydrolyzes the alpha-chain of fibrinogen (FGA) while leaving the beta and gamma chains unaffected. It inhibits collagen-induced platelet aggregation through the binding to alpha-2/beta-1 integrin (ITGA2/ITGB1) (collagen receptor), and it cleaves the beta-1 subunit of the same integrin, inhibiting platelet interaction and ultimately causing impairment of signal transduction. It has inability to be affected by the plasma inhibitor alpha(2)-macroglobulin. In fibroblasts, it functions as a collagen-mimetic substrate and, in endothelial cells, it causes apoptosis and indirectly inhibits cell proliferation by release of angiostatin-like compounds. It induces a strong pro-inflammatory response characterized by intense leukocyte accumulation and release of cytokines at the site of the injection. Although hemorrhage and edema are a response to the direct effect of this toxin, jararhagin-induced inflammation and necrosis are dependent on macrophages and key pro-inflammatory cytokines or their receptors. It also possesses anti-tumorgenic properties. The monomeric form inhibits collagen- and ADP-induced platelet aggregation, but has no effect on glycoprotein Ib-IX-dependent (GP1BA/GP5/GP9) platelet agglutination. Locally activates the early events of an acute inflammatory response as leukocyte rolling and pro-inflammatory cytokine release. Its function is as follows. The dimeric form jaracetin may be a dimeric form of jararhagin-C. It binds to von Willebrand factor (VWF) and induces its interaction with GPIbalpha (GP1BA) (via the vWF A1 domain), resulting in platelet aggregation. Also binds the alpha-2 subunit of the alpha-2/beta-1 (ITGA2/ITGB1) integrin. It potently induces platelet aggregation in citrated platelet-rich plasma. In Bothrops jararaca (Jararaca), this protein is Zinc metalloproteinase-disintegrin-like jararhagin.